The following is a 256-amino-acid chain: tRNA (guanine-N(7)-)-methyltransferase (256 aa).

The segment at 1 to 25 (MVATGGQAQDQSQNQEPDVLNPTSA) is disordered. Residues glycine 79, 102-103 (EI), 137-138 (NA), and leucine 157 each bind S-adenosyl-L-methionine. Residue aspartate 160 is part of the active site. 235–237 (SEE) lines the S-adenosyl-L-methionine pocket.

This sequence belongs to the class I-like SAM-binding methyltransferase superfamily. TrmB family.

The protein localises to the nucleus. The catalysed reaction is guanosine(46) in tRNA + S-adenosyl-L-methionine = N(7)-methylguanosine(46) in tRNA + S-adenosyl-L-homocysteine. Its pathway is tRNA modification; N(7)-methylguanine-tRNA biosynthesis. Its function is as follows. Catalyzes the formation of N(7)-methylguanine at position 46 (m7G46) in tRNA. In Drosophila simulans (Fruit fly), this protein is tRNA (guanine-N(7)-)-methyltransferase.